The primary structure comprises 159 residues: Cyclic pyranopterin monophosphate synthase (159 aa).

Substrate-binding positions include 75–77 (LCH) and 113–114 (ME). Asp128 is an active-site residue.

Belongs to the MoaC family. In terms of assembly, homohexamer; trimer of dimers.

The enzyme catalyses (8S)-3',8-cyclo-7,8-dihydroguanosine 5'-triphosphate = cyclic pyranopterin phosphate + diphosphate. Its pathway is cofactor biosynthesis; molybdopterin biosynthesis. Its function is as follows. Catalyzes the conversion of (8S)-3',8-cyclo-7,8-dihydroguanosine 5'-triphosphate to cyclic pyranopterin monophosphate (cPMP). The protein is Cyclic pyranopterin monophosphate synthase of Burkholderia multivorans (strain ATCC 17616 / 249).